The primary structure comprises 99 residues: PqqA binding protein (99 aa).

It belongs to the PqqD family. As to quaternary structure, monomer. Interacts with PqqE.

It participates in cofactor biosynthesis; pyrroloquinoline quinone biosynthesis. In terms of biological role, functions as a PqqA binding protein and presents PqqA to PqqE, in the pyrroloquinoline quinone (PQQ) biosynthetic pathway. The protein is PqqA binding protein of Acinetobacter baylyi (strain ATCC 33305 / BD413 / ADP1).